Here is a 281-residue protein sequence, read N- to C-terminus: uncharacterized protein (281 aa).

A run of 4 helical transmembrane segments spans residues 8-28, 97-117, 147-167, and 210-230; these read ALPVVAIVALVASGVITFIWS, LAVALHGLGLSVLLFDYRGYG, PARIAYFGESLGAAVAVGLAV, and IASVHAPVLVIAGGSDDIVPA.

It to S.pombe bem46 and yeast YNL320w.

Its subcellular location is the cell membrane. This is an uncharacterized protein from Mycobacterium tuberculosis (strain CDC 1551 / Oshkosh).